A 175-amino-acid chain; its full sequence is Protein tyrosine phosphatase PRL-1 (175 aa).

The region spanning 15–172 is the Tyrosine-protein phosphatase domain; it reads KPSRVLFHFL…YKRRHQGAGC (158 aa). Cys-53 and Cys-114 are joined by a disulfide. The active-site Proton donor is Asp-76. Cys-114 (phosphocysteine intermediate) is an active-site residue. Residue 116 to 120 coordinates substrate; that stretch reads AGLGR. Cys-172 is subject to Cysteine methyl ester. Residue Cys-172 is the site of S-farnesyl cysteine attachment. A propeptide spans 173–175 (removed in mature form); sequence VIM.

The protein belongs to the protein-tyrosine phosphatase family.

It is found in the cytoplasm. It localises to the mitochondrion matrix. The protein localises to the kinetoplast. Its subcellular location is the secreted. The protein resides in the extracellular exosome. The enzyme catalyses O-phospho-L-tyrosyl-[protein] + H2O = L-tyrosyl-[protein] + phosphate. Activated in a reduced environment which promotes the reduction of the disulfide bond between the regulatory Cys-53 and catalytic Cys-114 residues. Has protein tyrosine phosphatase activity and may act as a virulence factor to support intracellular survival in host macrophages. The polypeptide is Protein tyrosine phosphatase PRL-1 (Leishmania major).